Consider the following 406-residue polypeptide: [Pyruvate dehydrogenase (acetyl-transferring)] kinase isozyme 3, mitochondrial (406 aa).

The Histidine kinase domain maps to 131-362; sequence IEYKEKFGFD…DAVIYLKALS (232 aa). Residue 247 to 254 coordinates ATP; it reads ELFKNSMR. N6-succinyllysine is present on Lys-278. ATP contacts are provided by residues Asp-287, 306–307, and 323–328; these read ST and GFGYGL. The interval 383-406 is disordered; sequence TPEADDWSNPSSEPRDASKYKAKQ. Residues 395 to 406 show a composition bias toward basic and acidic residues; the sequence is EPRDASKYKAKQ.

The protein belongs to the PDK/BCKDK protein kinase family. As to quaternary structure, homodimer. Interacts with the pyruvate dehydrogenase complex subunit DLAT, and is part of the multimeric pyruvate dehydrogenase complex that contains multiple copies of pyruvate dehydrogenase (E1), dihydrolipoamide acetyltransferase (DLAT, E2) and lipoamide dehydrogenase (DLD, E3). As to expression, expressed in heart, skeletal muscle, spinal cord, as well as fetal and adult brain.

It is found in the mitochondrion matrix. It catalyses the reaction L-seryl-[pyruvate dehydrogenase E1 alpha subunit] + ATP = O-phospho-L-seryl-[pyruvate dehydrogenase E1 alpha subunit] + ADP + H(+). Its activity is regulated as follows. Activated by interaction with DLAT. Inhibited by AZD7545, dichloroacetate and radicicol. In terms of biological role, inhibits pyruvate dehydrogenase activity by phosphorylation of the E1 subunit PDHA1, and thereby regulates glucose metabolism and aerobic respiration. Can also phosphorylate PDHA2. Decreases glucose utilization and increases fat metabolism in response to prolonged fasting, and as adaptation to a high-fat diet. Plays a role in glucose homeostasis and in maintaining normal blood glucose levels in function of nutrient levels and under starvation. Plays a role in the generation of reactive oxygen species. This chain is [Pyruvate dehydrogenase (acetyl-transferring)] kinase isozyme 3, mitochondrial (PDK3), found in Homo sapiens (Human).